Consider the following 167-residue polypeptide: RNA pyrophosphohydrolase (167 aa).

The Nudix hydrolase domain maps to 8 to 159; sequence PYRTCVGVML…KRPVYERVVK (152 aa). The Nudix box signature appears at 47–68; it reads GGVDPGEDTWAAAKRELYEETS.

Belongs to the Nudix hydrolase family. RppH subfamily. The cofactor is a divalent metal cation.

In terms of biological role, accelerates the degradation of transcripts by removing pyrophosphate from the 5'-end of triphosphorylated RNA, leading to a more labile monophosphorylated state that can stimulate subsequent ribonuclease cleavage. The protein is RNA pyrophosphohydrolase of Bradyrhizobium diazoefficiens (strain JCM 10833 / BCRC 13528 / IAM 13628 / NBRC 14792 / USDA 110).